The sequence spans 206 residues: Large ribosomal subunit protein uL4 (206 aa).

The segment at 43–78 (ARSGNRKQKDREEVKHTTKKPWRQKGTGRARAGMSS) is disordered. Over residues 49 to 58 (KQKDREEVKH) the composition is skewed to basic and acidic residues. A compositionally biased stretch (basic residues) spans 59 to 70 (TTKKPWRQKGTG).

It belongs to the universal ribosomal protein uL4 family. In terms of assembly, part of the 50S ribosomal subunit.

In terms of biological role, one of the primary rRNA binding proteins, this protein initially binds near the 5'-end of the 23S rRNA. It is important during the early stages of 50S assembly. It makes multiple contacts with different domains of the 23S rRNA in the assembled 50S subunit and ribosome. Functionally, forms part of the polypeptide exit tunnel. The chain is Large ribosomal subunit protein uL4 from Ralstonia nicotianae (strain ATCC BAA-1114 / GMI1000) (Ralstonia solanacearum).